The sequence spans 408 residues: MSNNNDKQYTTQELNAMSNEDLARLGTELDDVTIAYRKERFPIANDPAEKRAARAVTFWLVLGIIGGLGFLATYIFWPWEYKAHGDEGLLAYTLYTPMLGITSGLCILSLGFAVVLYVKKFIPEEIAVQRRHDGPSEEVDRRTIVALLNDSWQTSTLGRRKLIMGLAGGGAVLAGLTIIAPMGGMIKNPWNPKEGPMDVQGDGTLWTSGWTLVENDVKVYLGRDTAAIAESHTDATGEHWSTTGVSRLVRMRPEDLAAASMETVFPLPAEMVNDGAEYDPAKDVYEHQMHSVHGPRNAVMLIRLRTADAEKVIEREGQESFHYGDYYAYSKICTHIGCPTSLYEAQTNRILCPCHQSQFDALHYGKPVFGPAARALPQLPITVDEEGYLIAAGNFIEPLGPAFWERKS.

Helical transmembrane passes span 56–76, 98–118, and 162–182; these read VTFW…TYIF, MLGI…VLYV, and LIMG…IAPM. One can recognise a Rieske domain in the interval 293–390; that stretch reads HGPRNAVMLI…ITVDEEGYLI (98 aa). Positions 333, 335, 352, and 355 each coordinate [2Fe-2S] cluster. A disulfide bond links cysteine 338 and cysteine 354.

This sequence belongs to the Rieske iron-sulfur protein family. As to quaternary structure, the cytochrome bc1 complex is composed of a cytochrome b (QcrB), the Rieske iron-sulfur protein (QcrA) and a diheme cytochrome c (QcrC) subunit. The bc1 complex forms a supercomplex with cytochrome c oxidase (cytochrome aa3). Requires [2Fe-2S] cluster as cofactor.

The protein resides in the cell membrane. Its function is as follows. Iron-sulfur subunit of the cytochrome bc1 complex, an essential component of the respiratory electron transport chain required for ATP synthesis. The bc1 complex catalyzes the oxidation of menaquinol and the reduction of cytochrome c in the respiratory chain. The bc1 complex operates through a Q-cycle mechanism that couples electron transfer to generation of the proton gradient that drives ATP synthesis. The protein is Cytochrome bc1 complex Rieske iron-sulfur subunit (qcrA) of Corynebacterium glutamicum (strain ATCC 13032 / DSM 20300 / JCM 1318 / BCRC 11384 / CCUG 27702 / LMG 3730 / NBRC 12168 / NCIMB 10025 / NRRL B-2784 / 534).